A 102-amino-acid chain; its full sequence is Large ribosomal subunit protein bL21 (102 aa).

The protein belongs to the bacterial ribosomal protein bL21 family. In terms of assembly, part of the 50S ribosomal subunit. Contacts protein L20.

In terms of biological role, this protein binds to 23S rRNA in the presence of protein L20. This chain is Large ribosomal subunit protein bL21, found in Listeria monocytogenes serotype 4b (strain CLIP80459).